The sequence spans 251 residues: 2,3-bisphosphoglycerate-dependent phosphoglycerate mutase (251 aa).

Substrate is bound by residues 8–15 (RHGESLWN), 21–22 (TG), Arg-60, 87–90 (ERHY), Lys-98, 114–115 (RR), and 183–184 (GN). The Tele-phosphohistidine intermediate role is filled by His-9. Catalysis depends on Glu-87, which acts as the Proton donor/acceptor.

It belongs to the phosphoglycerate mutase family. BPG-dependent PGAM subfamily.

The enzyme catalyses (2R)-2-phosphoglycerate = (2R)-3-phosphoglycerate. Its pathway is carbohydrate degradation; glycolysis; pyruvate from D-glyceraldehyde 3-phosphate: step 3/5. Functionally, catalyzes the interconversion of 2-phosphoglycerate and 3-phosphoglycerate. The protein is 2,3-bisphosphoglycerate-dependent phosphoglycerate mutase of Thermoanaerobacter pseudethanolicus (strain ATCC 33223 / 39E) (Clostridium thermohydrosulfuricum).